The following is a 228-amino-acid chain: UPF0758 protein SAB1521c (228 aa).

An MPN domain is found at 102–224 (KITQPSDVAD…FTSLVEAGYF (123 aa)). Histidine 173, histidine 175, and aspartate 186 together coordinate Zn(2+). The JAMM motif signature appears at 173–186 (HNHPSGDVTPSQED).

It belongs to the UPF0758 family.

The sequence is that of UPF0758 protein SAB1521c from Staphylococcus aureus (strain bovine RF122 / ET3-1).